The primary structure comprises 252 residues: Imidazole glycerol phosphate synthase subunit HisF (252 aa).

Active-site residues include aspartate 11 and aspartate 130.

Belongs to the HisA/HisF family. As to quaternary structure, heterodimer of HisH and HisF.

It is found in the cytoplasm. It carries out the reaction 5-[(5-phospho-1-deoxy-D-ribulos-1-ylimino)methylamino]-1-(5-phospho-beta-D-ribosyl)imidazole-4-carboxamide + L-glutamine = D-erythro-1-(imidazol-4-yl)glycerol 3-phosphate + 5-amino-1-(5-phospho-beta-D-ribosyl)imidazole-4-carboxamide + L-glutamate + H(+). It functions in the pathway amino-acid biosynthesis; L-histidine biosynthesis; L-histidine from 5-phospho-alpha-D-ribose 1-diphosphate: step 5/9. Functionally, IGPS catalyzes the conversion of PRFAR and glutamine to IGP, AICAR and glutamate. The HisF subunit catalyzes the cyclization activity that produces IGP and AICAR from PRFAR using the ammonia provided by the HisH subunit. The protein is Imidazole glycerol phosphate synthase subunit HisF of Lacticaseibacillus paracasei (strain ATCC 334 / BCRC 17002 / CCUG 31169 / CIP 107868 / KCTC 3260 / NRRL B-441) (Lactobacillus paracasei).